The primary structure comprises 273 residues: Shikimate dehydrogenase (NADP(+)) (273 aa).

Residues 14–16 and Thr61 each bind shikimate; that span reads SKS. The active-site Proton acceptor is the Lys65. Residue Glu77 participates in NADP(+) binding. Shikimate contacts are provided by Asn86 and Asp102. NADP(+)-binding positions include 126–130, 150–155, and Met214; these read GAGGA and NRTLSK. Shikimate is bound at residue Tyr216. Gly238 provides a ligand contact to NADP(+).

It belongs to the shikimate dehydrogenase family. As to quaternary structure, homodimer.

It catalyses the reaction shikimate + NADP(+) = 3-dehydroshikimate + NADPH + H(+). It participates in metabolic intermediate biosynthesis; chorismate biosynthesis; chorismate from D-erythrose 4-phosphate and phosphoenolpyruvate: step 4/7. Its function is as follows. Involved in the biosynthesis of the chorismate, which leads to the biosynthesis of aromatic amino acids. Catalyzes the reversible NADPH linked reduction of 3-dehydroshikimate (DHSA) to yield shikimate (SA). This is Shikimate dehydrogenase (NADP(+)) from Photobacterium profundum (strain SS9).